Reading from the N-terminus, the 84-residue chain is MKVVLLVCLVWMMAMMELVSCECWSQADCSDGHCCAGSSFSKNCRPYGGDGEQCEPRNKYEVYSTGCPCEENLMCSVINRCQSA.

Positions 1-21 are cleaved as a signal peptide; that stretch reads MKVVLLVCLVWMMAMMELVSC. 5 cysteine pairs are disulfide-bonded: Cys23-Cys35, Cys29-Cys44, Cys34-Cys67, Cys54-Cys75, and Cys69-Cys81.

It belongs to the AVIT (prokineticin) family. Expressed by the venom gland.

It localises to the secreted. The protein is U8-theraphotoxin-Hhn1c 2 of Cyriopagopus hainanus (Chinese bird spider).